Reading from the N-terminus, the 622-residue chain is Low affinity potassium transport system protein Kup (622 aa).

12 helical membrane-spanning segments follow: residues 9–29 (LPAVTLAAIGVVYGDIGTSPL), 52–72 (FLSLIFWLLILIVSLKYLLFV), 99–119 (TPVLVIIGLIGGSFFYGEVVI), 137–157 (PSLQEFIVPLSVVVLTLLFFI), 165–185 (VGKLFAPVMLLWFLTLGVLGV), 213–233 (VSFFALGAVVLAITGVEALYA), 247–267 (WFSAVLPSLVLNYFGQGALLL), 276–296 (PFFLLAPDWAMIPLLILATLA), 337–357 (IYIPFINWLLYIAVVLVIVSF), 363–383 (LAAAYGIAVTGTMVLTSILSC), 394–414 (LLIVSVLLLALLCLDVSMFAA), and 419–439 (IFSGGWLPLLLGFLMFIAMIT).

It belongs to the HAK/KUP transporter (TC 2.A.72) family.

It localises to the cell inner membrane. The enzyme catalyses K(+)(in) + H(+)(in) = K(+)(out) + H(+)(out). Its function is as follows. Responsible for the low-affinity transport of potassium into the cell. Likely operates as a K(+):H(+) symporter. This Sodalis glossinidius (strain morsitans) protein is Low affinity potassium transport system protein Kup.